A 1049-amino-acid polypeptide reads, in one-letter code: Presequence protease, mitochondrial (1049 aa).

Residues Met-1–Leu-39 constitute a mitochondrion transit peptide. Residue His-113 coordinates Zn(2+). Residue Glu-116 is the Proton acceptor of the active site. Position 117 (His-117) interacts with Zn(2+). Glu-189 is an active-site residue. Glu-222 contributes to the Zn(2+) binding site.

It belongs to the peptidase M16 family. PreP subfamily. As to quaternary structure, monomer and homodimer; homodimerization is induced by binding of the substrate. The cofactor is Zn(2+).

The protein resides in the mitochondrion intermembrane space. It localises to the mitochondrion matrix. In terms of biological role, degrades mitochondrial transit peptides after their cleavage in the intermembrane space or in the matrix, and presequence peptides; clearance of these peptides is required to keep the presequence processing machinery running. Preferentially cleaves the N-terminal side of paired basic amino acid residues. Also degrades other unstructured peptides. May function as an ATP-dependent peptidase as opposed to a metalloendopeptidase. The protein is Presequence protease, mitochondrial (cym1) of Emericella nidulans (strain FGSC A4 / ATCC 38163 / CBS 112.46 / NRRL 194 / M139) (Aspergillus nidulans).